A 221-amino-acid polypeptide reads, in one-letter code: Ribosomal RNA small subunit methyltransferase G (221 aa).

Residues Gly-85, Leu-90, 138–139, and Arg-151 each bind S-adenosyl-L-methionine; that span reads AE.

Belongs to the methyltransferase superfamily. RNA methyltransferase RsmG family.

It localises to the cytoplasm. It carries out the reaction guanosine(527) in 16S rRNA + S-adenosyl-L-methionine = N(7)-methylguanosine(527) in 16S rRNA + S-adenosyl-L-homocysteine. Its function is as follows. Specifically methylates the N7 position of guanine in position 527 of 16S rRNA. The polypeptide is Ribosomal RNA small subunit methyltransferase G (Caulobacter sp. (strain K31)).